The sequence spans 1360 residues: TRAF2 and NCK-interacting protein kinase (1360 aa).

Residues 25-289 form the Protein kinase domain; it reads FELVELVGNG…TEQLMKHPFI (265 aa). Residues 31 to 39 and K54 each bind ATP; that span reads VGNGTYGQV. The active-site Proton acceptor is D153. T187 carries the phosphothreonine modification. Disordered regions lie at residues 284-347, 398-440, and 539-589; these read MKHP…LPGE, QKEQ…RRRA, and ERSR…RPVD. A compositionally biased stretch (basic and acidic residues) spans 288–307; it reads FIRDQPNERQVRIQLKDHID. The interval 290-1047 is mediates interaction with NEDD4; the sequence is RDQPNERQVR…EIRKYKKRFN (758 aa). Positions 317-335 are enriched in acidic residues; sequence DETEYEYSGSEEEEEENDS. S324 and S326 each carry phosphoserine. Phosphoserine is present on residues S560 and S570. T581 is subject to Phosphothreonine. Phosphoserine occurs at positions 600, 608, 610, and 640. Disordered regions lie at residues 601–801, 814–878, 908–927, and 933–998; these read QGPA…KAID, LRIE…YNVG, TSGEKKRSGHSDSNGFAGHI, and VQQS…ESSA. A compositionally biased stretch (basic and acidic residues) spans 652–669; that stretch reads RIEKFDRSSWLRQEEDIP. A phosphoserine mark is found at S678, S680, S688, S701, S707, S720, S764, S766, and S769. A compositionally biased stretch (low complexity) spans 720–755; the sequence is SPLQRTSSGSSSSSSTPSSQPSSQGGSQPGSQAGSS. Basic and acidic residues-rich tracts occupy residues 775–789 and 814–827; these read EPAKVKPEESRDITR and LRIEETNRPMKKVT. Acidic residues predominate over residues 834-847; it reads EESESSEEEEEDGE. The span at 908 to 917 shows a compositional bias: basic and acidic residues; the sequence is TSGEKKRSGH. S959 carries the post-translational modification Phosphoserine. Residues 987–996 show a composition bias toward acidic residues; the sequence is TDEDEEDEES. The region spanning 1047–1334 is the CNH domain; sequence NSEILCAALW…KFLCERNDKV (288 aa).

It belongs to the protein kinase superfamily. STE Ser/Thr protein kinase family. STE20 subfamily. Interacts (via the CNH domain) with RAP2A (GTP-bound form preferentially); the interaction is direct and required for the activation of TNIK by RAP2A. Interacts with NEDD4; recruits RAP2A to NEDD4. Interacts with TRAF2 and NCK. Interacts with TCF7L2/TCF4 and CTNNB1; the interaction is direct. Interacts with TANC1. In terms of processing, autophosphorylated. Autophosphorylation is activated by RAP2A and induces association to the cytoskeletal fraction. As to expression, expressed ubiquitously. Highest levels observed in heart, brain and skeletal muscle. Expressed in normal colonic epithelia and colorectal cancer tissues.

The protein resides in the nucleus. Its subcellular location is the cytoplasm. It localises to the recycling endosome. It is found in the cytoskeleton. The enzyme catalyses L-seryl-[protein] + ATP = O-phospho-L-seryl-[protein] + ADP + H(+). The catalysed reaction is L-threonyl-[protein] + ATP = O-phospho-L-threonyl-[protein] + ADP + H(+). In terms of biological role, serine/threonine kinase that acts as an essential activator of the Wnt signaling pathway. Recruited to promoters of Wnt target genes and required to activate their expression. May act by phosphorylating TCF4/TCF7L2. Appears to act upstream of the JUN N-terminal pathway. May play a role in the response to environmental stress. Part of a signaling complex composed of NEDD4, RAP2A and TNIK which regulates neuronal dendrite extension and arborization during development. More generally, it may play a role in cytoskeletal rearrangements and regulate cell spreading. Phosphorylates SMAD1 on Thr-322. Activator of the Hippo signaling pathway which plays a pivotal role in organ size control and tumor suppression by restricting proliferation and promoting apoptosis. MAP4Ks act in parallel to and are partially redundant with STK3/MST2 and STK4/MST2 in the phosphorylation and activation of LATS1/2, and establish MAP4Ks as components of the expanded Hippo pathway. This Homo sapiens (Human) protein is TRAF2 and NCK-interacting protein kinase.